We begin with the raw amino-acid sequence, 270 residues long: Proteasome subunit alpha (270 aa).

Positions 229 to 270 (LLDTEAAGSTPTDAPSDTEDGDSTDGTDRADGTTDSTEETEK) are disordered. Positions 244–253 (SDTEDGDSTD) are enriched in acidic residues.

Belongs to the peptidase T1A family. As to quaternary structure, the 20S proteasome core is composed of 14 alpha and 14 beta subunits that assemble into four stacked heptameric rings, resulting in a barrel-shaped structure. The two inner rings, each composed of seven catalytic beta subunits, are sandwiched by two outer rings, each composed of seven alpha subunits. The catalytic chamber with the active sites is on the inside of the barrel. Has a gated structure, the ends of the cylinder being occluded by the N-termini of the alpha-subunits. Is capped by the proteasome-associated ATPase, ARC.

It is found in the cytoplasm. It participates in protein degradation; proteasomal Pup-dependent pathway. The formation of the proteasomal ATPase ARC-20S proteasome complex, likely via the docking of the C-termini of ARC into the intersubunit pockets in the alpha-rings, may trigger opening of the gate for substrate entry. Interconversion between the open-gate and close-gate conformations leads to a dynamic regulation of the 20S proteasome proteolysis activity. Functionally, component of the proteasome core, a large protease complex with broad specificity involved in protein degradation. In Streptomyces griseus subsp. griseus (strain JCM 4626 / CBS 651.72 / NBRC 13350 / KCC S-0626 / ISP 5235), this protein is Proteasome subunit alpha.